Reading from the N-terminus, the 180-residue chain is Large ribosomal subunit protein uL6 (180 aa).

This sequence belongs to the universal ribosomal protein uL6 family. Part of the 50S ribosomal subunit.

Functionally, this protein binds to the 23S rRNA, and is important in its secondary structure. It is located near the subunit interface in the base of the L7/L12 stalk, and near the tRNA binding site of the peptidyltransferase center. The polypeptide is Large ribosomal subunit protein uL6 (Clostridium botulinum (strain Alaska E43 / Type E3)).